The primary structure comprises 203 residues: Large ribosomal subunit protein bL25 (203 aa).

Belongs to the bacterial ribosomal protein bL25 family. CTC subfamily. As to quaternary structure, part of the 50S ribosomal subunit; part of the 5S rRNA/L5/L18/L25 subcomplex. Contacts the 5S rRNA. Binds to the 5S rRNA independently of L5 and L18.

Its function is as follows. This is one of the proteins that binds to the 5S RNA in the ribosome where it forms part of the central protuberance. This Rickettsia rickettsii (strain Iowa) protein is Large ribosomal subunit protein bL25.